The chain runs to 226 residues: Molybdenum transport system permease protein ModB (226 aa).

Positions 11–217 (IRLTLELASL…SFLVLFALYS (207 aa)) constitute an ABC transmembrane type-1 domain. The next 5 helical transmembrane spans lie at 17–37 (LASL…WWLA), 47–67 (IGAV…FYLL), 88–108 (LPFT…PFVV), 150–170 (ITAA…VLMI), and 197–217 (AHWL…ALYS).

Belongs to the binding-protein-dependent transport system permease family. CysTW subfamily.

Its subcellular location is the cell inner membrane. In terms of biological role, part of the binding-protein-dependent transport system for molybdenum; probably responsible for the translocation of the substrate across the membrane. This is Molybdenum transport system permease protein ModB (modB) from Azotobacter vinelandii.